The chain runs to 105 residues: Small ribosomal subunit protein uS10 (105 aa).

It belongs to the universal ribosomal protein uS10 family. As to quaternary structure, part of the 30S ribosomal subunit.

Involved in the binding of tRNA to the ribosomes. The chain is Small ribosomal subunit protein uS10 from Trichormus variabilis (strain ATCC 29413 / PCC 7937) (Anabaena variabilis).